The chain runs to 262 residues: Sulfur carrier protein FdhD (262 aa).

Residue cysteine 105 is the Cysteine persulfide intermediate of the active site. 246-251 (FVRKNR) contacts Mo-bis(molybdopterin guanine dinucleotide).

This sequence belongs to the FdhD family.

The protein localises to the cytoplasm. Functionally, required for formate dehydrogenase (FDH) activity. Acts as a sulfur carrier protein that transfers sulfur from IscS to the molybdenum cofactor prior to its insertion into FDH. In Picrophilus torridus (strain ATCC 700027 / DSM 9790 / JCM 10055 / NBRC 100828 / KAW 2/3), this protein is Sulfur carrier protein FdhD.